The following is a 209-amino-acid chain: Pyridoxal 5'-phosphate synthase subunit PdxT (209 aa).

Residue Gly-58–Ser-60 coordinates L-glutamine. Cys-90 functions as the Nucleophile in the catalytic mechanism. L-glutamine-binding positions include Arg-119 and Ile-148–Arg-149. Catalysis depends on charge relay system residues His-185 and Glu-187.

Belongs to the glutaminase PdxT/SNO family. As to quaternary structure, in the presence of PdxS, forms a dodecamer of heterodimers. Only shows activity in the heterodimer.

It carries out the reaction aldehydo-D-ribose 5-phosphate + D-glyceraldehyde 3-phosphate + L-glutamine = pyridoxal 5'-phosphate + L-glutamate + phosphate + 3 H2O + H(+). It catalyses the reaction L-glutamine + H2O = L-glutamate + NH4(+). It functions in the pathway cofactor biosynthesis; pyridoxal 5'-phosphate biosynthesis. Catalyzes the hydrolysis of glutamine to glutamate and ammonia as part of the biosynthesis of pyridoxal 5'-phosphate. The resulting ammonia molecule is channeled to the active site of PdxS. The polypeptide is Pyridoxal 5'-phosphate synthase subunit PdxT (Clavibacter michiganensis subsp. michiganensis (strain NCPPB 382)).